A 41-amino-acid polypeptide reads, in one-letter code: Pi-stichotoxin-Hcr5c (41 aa).

Intrachain disulfides connect C4/C37, C6/C30, and C20/C38.

The protein belongs to the sea anemone type 3 (BDS) potassium channel toxin family.

It is found in the secreted. Its subcellular location is the nematocyst. Functionally, weakly and reversibly inhibits rat homomeric ASIC1 (isoform ASIC1a) (IC(50)=4.95 uM), and ASIC3 (IC(50)=17 uM). ASIC1a current inhibition and ASIC3 transient current inhibition are not complete, and reach a maximum of 70% inhibition and 80%, respectively. The sequence is that of Pi-stichotoxin-Hcr5c from Radianthus crispa (Leathery sea anemone).